Here is a 271-residue protein sequence, read N- to C-terminus: Ribosomal RNA small subunit methyltransferase I (271 aa).

This sequence belongs to the methyltransferase superfamily. RsmI family.

It is found in the cytoplasm. It carries out the reaction cytidine(1402) in 16S rRNA + S-adenosyl-L-methionine = 2'-O-methylcytidine(1402) in 16S rRNA + S-adenosyl-L-homocysteine + H(+). Functionally, catalyzes the 2'-O-methylation of the ribose of cytidine 1402 (C1402) in 16S rRNA. This chain is Ribosomal RNA small subunit methyltransferase I, found in Campylobacter fetus subsp. fetus (strain 82-40).